A 220-amino-acid polypeptide reads, in one-letter code: ATP phosphoribosyltransferase (220 aa).

Belongs to the ATP phosphoribosyltransferase family. Short subfamily. Heteromultimer composed of HisG and HisZ subunits.

It localises to the cytoplasm. The catalysed reaction is 1-(5-phospho-beta-D-ribosyl)-ATP + diphosphate = 5-phospho-alpha-D-ribose 1-diphosphate + ATP. Its pathway is amino-acid biosynthesis; L-histidine biosynthesis; L-histidine from 5-phospho-alpha-D-ribose 1-diphosphate: step 1/9. In terms of biological role, catalyzes the condensation of ATP and 5-phosphoribose 1-diphosphate to form N'-(5'-phosphoribosyl)-ATP (PR-ATP). Has a crucial role in the pathway because the rate of histidine biosynthesis seems to be controlled primarily by regulation of HisG enzymatic activity. This is ATP phosphoribosyltransferase from Janthinobacterium sp. (strain Marseille) (Minibacterium massiliensis).